The primary structure comprises 541 residues: 5' exonuclease Apollo (541 aa).

Lys334 participates in a covalent cross-link: Glycyl lysine isopeptide (Lys-Gly) (interchain with G-Cter in SUMO2). The segment at 455–475 (PLLSRGDSGSPARGNQSDCVG) is disordered. Residues 492-507 (ESRGLALKYLLTPVHF) carry the TBM motif.

It belongs to the DNA repair metallo-beta-lactamase (DRMBL) family. In terms of assembly, interacts with MUS81, MRE11 and FANCD2. Interacts with HSPA2, HSPA8 and HSPA14. Interacts with SPAG5. Interacts with TERF2; the interaction is direct. In terms of processing, ubiquitinated, leading to its degradation. Interaction with TERF2 protects it from ubiquitination.

Its subcellular location is the chromosome. It is found in the telomere. The protein localises to the nucleus. It localises to the cytoplasm. The protein resides in the cytoskeleton. Its subcellular location is the microtubule organizing center. It is found in the centrosome. It carries out the reaction a beta-lactam + H2O = a substituted beta-amino acid. In terms of biological role, 5'-3' exonuclease that plays a central role in telomere maintenance and protection during S-phase. Participates in the protection of telomeres against non-homologous end-joining (NHEJ)-mediated repair, thereby ensuring that telomeres do not fuse. Plays a key role in telomeric loop (T loop) formation by being recruited by TERF2 at the leading end telomeres and by processing leading-end telomeres immediately after their replication via its exonuclease activity: generates 3' single-stranded overhang at the leading end telomeres avoiding blunt leading-end telomeres that are vulnerable to end-joining reactions and expose the telomere end in a manner that activates the DNA repair pathways. Together with TERF2, required to protect telomeres from replicative damage during replication by controlling the amount of DNA topoisomerase (TOP1, TOP2A and TOP2B) needed for telomere replication during fork passage and prevent aberrant telomere topology. Also involved in response to DNA damage: plays a role in response to DNA interstrand cross-links (ICLs) by facilitating double-strand break formation. In case of spindle stress, involved in prophase checkpoint. Possesses beta-lactamase activity, catalyzing the hydrolysis of penicillin G and nitrocefin. Exhibits no activity towards other beta-lactam antibiotic classes including cephalosporins (cefotaxime) and carbapenems (imipenem). This is 5' exonuclease Apollo (Dclre1b) from Mus musculus (Mouse).